The primary structure comprises 143 residues: Large ribosomal subunit protein uL15 (143 aa).

Residues 1 to 51 (MELNTIKPASGAKHAKRRVGRGIGSGLGKTAGRGHKGQKSRAGGYHKVGFE) form a disordered region. Residues 21–31 (RGIGSGLGKTA) show a composition bias toward gly residues.

It belongs to the universal ribosomal protein uL15 family. As to quaternary structure, part of the 50S ribosomal subunit.

Binds to the 23S rRNA. The polypeptide is Large ribosomal subunit protein uL15 (Methylibium petroleiphilum (strain ATCC BAA-1232 / LMG 22953 / PM1)).